The primary structure comprises 349 residues: MKLKKMNLPYISNTYDVRKIMFLVVLSCIPGLCTEIYFFGCGVLIQTLLFVIISLLFEIIILKMRRKNIKNSLFDYSSFLTAVLLGLSTPCALPWWMIIFSCFFAIVISKYLYGGLGQNIFNPAMIGYVVLLISFPVHMTAWNEKNSSLSFYNDIKKSINLILFYNKLNNSKKKICPDNFTEATPLDDFKTKSHFDYDFFPEESAVKKKTKIVSIAWKYINISFLIGGCFLLYKKVICWRIPLSFLSSLIFFSSITYFYSQKFFCSPLFHLFSGGTMMCAFFIATDPVTTSCTKIGKIFFGLIIGFLVWIIRNYSDYPDGIAFSVLFANMIVPLMDAYLKTSGYGHKNL.

4 helical membrane passes run 20-40 (IMFL…YFFG), 42-62 (GVLI…IIIL), 83-105 (VLLG…CFFA), and 120-140 (IFNP…VHMT). The residue at position 184 (Thr-184) is an FMN phosphoryl threonine. 5 helical membrane passes run 212–232 (IVSI…CFLL), 236–256 (VICW…SSIT), 263–283 (FFCS…AFFI), 291–311 (SCTK…VWII), and 319–339 (DGIA…DAYL).

Belongs to the NqrB/RnfD family. The complex is composed of six subunits: RnfA, RnfB, RnfC, RnfD, RnfE and RnfG. FMN serves as cofactor.

The protein localises to the cell inner membrane. Its function is as follows. Part of a membrane-bound complex that couples electron transfer with translocation of ions across the membrane. This is Ion-translocating oxidoreductase complex subunit D from Buchnera aphidicola subsp. Schizaphis graminum (strain Sg).